The sequence spans 93 residues: Large ribosomal subunit protein mL41 (93 aa).

The N-terminal 13 residues, 1 to 13 (MHQSLLCFGARRL), are a transit peptide targeting the mitochondrion.

This sequence belongs to the mitochondrion-specific ribosomal protein mL41 family. Component of the mitochondrial large ribosomal subunit (mt-LSU). Mature yeast 74S mitochondrial ribosomes consist of a small (37S) and a large (54S) subunit. The 37S small subunit contains a 15S ribosomal RNA (15S mt-rRNA) and at least 32 different proteins. The 54S large subunit contains a 21S rRNA (21S mt-rRNA) and at least 45 different proteins.

It localises to the mitochondrion. Functionally, component of the mitochondrial ribosome (mitoribosome), a dedicated translation machinery responsible for the synthesis of mitochondrial genome-encoded proteins, including at least some of the essential transmembrane subunits of the mitochondrial respiratory chain. The mitoribosomes are attached to the mitochondrial inner membrane and translation products are cotranslationally integrated into the membrane. The protein is Large ribosomal subunit protein mL41 (mrpl27) of Schizosaccharomyces pombe (strain 972 / ATCC 24843) (Fission yeast).